We begin with the raw amino-acid sequence, 192 residues long: Protein SHORT HYPOCOTYL IN WHITE LIGHT 1 (192 aa).

Positions 43–50 (FRRLNRSL) match the Nuclear localization signal motif. The interval 70–92 (GGDNYDVVPDDDGFSDDDDEEDE) is disordered. The span at 77 to 92 (VPDDDGFSDDDDEEDE) shows a compositional bias: acidic residues. A run of 2 helical transmembrane segments spans residues 122–142 (ILPA…ILLL) and 159–179 (GGTV…ASFF).

Interacts with HY5 and COP1 in the nucleus. As to expression, expressed in young seedlings (e.g. hypocotyl and cotyledons) and in green tissues (e.g. leaves, stems, sepals, and young siliques).

It localises to the nucleus membrane. Functionally, negative regulator of photomorphogenesis modulating both light and abscisic acid (ABA) signaling pathways. Negatively regulates the light-mediated inhibition of hypocotyl elongation, probably in a PHYB-mediated signaling pathway, but promotes flowering time (especially in long days) and lateral root formation. Enhances light-regulated gene expression. Promotes COP1-mediated degradation of HY5 during seedling development (e.g. hypocotyl growth) through enhanced ubiquitination in the darkness. Also involved in root gravitropism. The polypeptide is Protein SHORT HYPOCOTYL IN WHITE LIGHT 1 (Arabidopsis thaliana (Mouse-ear cress)).